The sequence spans 143 residues: Small ribosomal subunit protein uS11c (143 aa).

This sequence belongs to the universal ribosomal protein uS11 family. Part of the 30S ribosomal subunit.

It localises to the plastid. Its subcellular location is the chloroplast. The sequence is that of Small ribosomal subunit protein uS11c from Saccharum officinarum (Sugarcane).